The sequence spans 142 residues: Protein KNATM (142 aa).

The stretch at lysine 4–arginine 36 forms a coiled coil.

In terms of assembly, interacts with KNAT1, KNAT3, KNAT4, BEL1, BLH2, BLH4 and BLH9, but not with BLH8 or the KNATM-A and KNATM-C isoforms. Isoforms KNATM-A and KNATM-C: no interactions with KNATM-B, KNOXX or BELL proteins. As to expression, detected in inflorescences, seedlings, leaves, hydathodes, stems, roots, embryo and siliques. Expressed in a polar pattern in organ primordia and at the boundary of mature organs. Detected in the lateral domains of flower meristems, but not in the inflorescence meristem or the vegetative shoot apical meristem.

It localises to the cytoplasm. It is found in the nucleus. Its function is as follows. Transcriptional regulator involved in leaf proximal/distal patterning. May act by sequestering BELL transcription factors. This chain is Protein KNATM, found in Arabidopsis thaliana (Mouse-ear cress).